Here is a 564-residue protein sequence, read N- to C-terminus: Rhodopsin kinase GRK1 (564 aa).

Residues 1-15 are interaction with RCVRN; the sequence is MDFGSLETVVANSAF. Residues 1 to 189 form an N-terminal region; it reads MDFGSLETVV…LEAQPIGEDW (189 aa). Serine 5 is modified (phosphoserine). Threonine 8 is modified (phosphothreonine). Residue serine 21 is modified to Phosphoserine; by PKA and autocatalysis. In terms of domain architecture, RGS spans 58–175; sequence FDNLCSEQPI…LGSLYFLRFL (118 aa). Residues 190 to 455 form the Protein kinase domain; it reads FLDFRVLGKG…CDALRANVLF (266 aa). ATP-binding positions include 196 to 204 and lysine 219; that span reads LGKGGFGEV. Aspartate 317 functions as the Proton acceptor in the catalytic mechanism. Residues 456–521 enclose the AGC-kinase C-terminal domain; the sequence is KDISWRQLEA…GNCSIPWQEE (66 aa). A C-terminal region spans residues 456–564; the sequence is KDISWRQLEA…TAKSGMCLIS (109 aa). Serine 491 is subject to Phosphoserine; by autocatalysis. Position 492 is a phosphothreonine; by autocatalysis (threonine 492). Cysteine 561 carries the cysteine methyl ester modification. Cysteine 561 is lipidated: S-farnesyl cysteine. The propeptide at 562-564 is removed in mature form; the sequence is LIS.

The protein belongs to the protein kinase superfamily. AGC Ser/Thr protein kinase family. GPRK subfamily. In terms of assembly, interacts (via N-terminus) with RCVRN (via C-terminus); the interaction is Ca(2+)-dependent. Interacts (when prenylated) with PDE6D; this promotes release from membranes. May form a complex composed of RHO, GRK1 and RCVRN in a Ca(2+)-dependent manner; RCVRN prevents the interaction between GRK1 and RHO. Post-translationally, autophosphorylated, Ser-21 is a minor site of autophosphorylation compared to Ser-491 and Thr-492. Phosphorylation at Ser-21 is regulated by light and activated by cAMP. In terms of processing, farnesylation is required for full activity. As to expression, detected in retina (at protein level). Retina-specific. Expressed in rod and cone photoreceptor cells.

It localises to the membrane. Its subcellular location is the cell projection. The protein localises to the cilium. It is found in the photoreceptor outer segment. It catalyses the reaction L-threonyl-[rhodopsin] + ATP = O-phospho-L-threonyl-[rhodopsin] + ADP + H(+). The catalysed reaction is L-seryl-[rhodopsin] + ATP = O-phospho-L-seryl-[rhodopsin] + ADP + H(+). Inhibited by RCVRN, which prevents the interaction between GRK1 and RHO. Inhibition is calcium-dependent. Retina-specific kinase involved in the signal turnoff via phosphorylation of rhodopsin (RHO), the G protein- coupled receptor that initiates the phototransduction cascade. This rapid desensitization is essential for scotopic vision and permits rapid adaptation to changes in illumination. May play a role in the maintenance of the outer nuclear layer in the retina. In Rattus norvegicus (Rat), this protein is Rhodopsin kinase GRK1.